Reading from the N-terminus, the 83-residue chain is Putative defensin-like protein 110 (83 aa).

Positions 1–24 (MAITKKNLIAFVFTILFVISYVHC) are cleaved as a signal peptide. 4 disulfides stabilise this stretch: Cys-43–Cys-81, Cys-49–Cys-73, Cys-59–Cys-79, and Cys-63–Cys-80.

Belongs to the DEFL family.

It is found in the secreted. The polypeptide is Putative defensin-like protein 110 (Arabidopsis thaliana (Mouse-ear cress)).